The following is a 269-amino-acid chain: MRRMTIGTVDGLHYELHGGPIAGREVVLLSSGLGGSGAFWAPQMQALTQRWPVVTYDHRGTGRSVRELPPRYTLAHMADDMVKVMDALGLAKAHVVGHAAGGNAGLQLALDHPDRLAKLVVVNGWSRPDPHIRRCFDTRLHLLNDTGPEAYVHAQPIFLYPADWISRNHTRLMAEEAHHVAAFPPREVMLARINALLAFDIDARLEDITHRVLISASADDMLVPMSCSQRLAGRLPNADFQQVAWGGHGFTVTDPETFNEALVSFLEGA.

The AB hydrolase-1 domain occupies 26 to 144 (VVLLSSGLGG…CFDTRLHLLN (119 aa)).

This sequence belongs to the AB hydrolase superfamily. Hydrolase RutD family.

It carries out the reaction carbamate + 2 H(+) = NH4(+) + CO2. In terms of biological role, involved in pyrimidine catabolism. May facilitate the hydrolysis of carbamate, a reaction that can also occur spontaneously. The sequence is that of Putative carbamate hydrolase RutD from Caulobacter vibrioides (strain ATCC 19089 / CIP 103742 / CB 15) (Caulobacter crescentus).